A 151-amino-acid chain; its full sequence is Large ribosomal subunit protein bL9 (151 aa).

This sequence belongs to the bacterial ribosomal protein bL9 family.

In terms of biological role, binds to the 23S rRNA. This chain is Large ribosomal subunit protein bL9, found in Mycoplasmopsis agalactiae (strain NCTC 10123 / CIP 59.7 / PG2) (Mycoplasma agalactiae).